Reading from the N-terminus, the 1161-residue chain is MFELNNFESIKIALASPEKIRQWSRGEVKKPETINYRTLKPEKDGLFCERIFGPQKDWECHCGKYRRVRYKGVVCDRCGVEVTKSKVRRERMGHIELAAPMSHIWYFKGIPSRMGLLLDMSPRSLEKILYFASYVVVDPGETGLNEKQLLTEKEYRTALEKYGYTFTVGMGAEAVKTLLQNIDLEQQSKDLRAELKDSTGQKKVRTIRRLEVVEAFKKSGNKPEWMILDAIPVIPPDLRPMVQLDGGRFATSDLNDLYRRVINRNNRLKRLLELGAPDIIVRNEKRMLQEAVDALIDNGRRGRPVTGPGNRPLKSLSDMLKGKQGRFRQNLLGKRVDYSGRSVIVVGPELKFYQCGLPKKMALELFKPFVMDKLVKEGYAHNIKSAKSIVEKVKPEVWDVLEDVIKSHPVLLNRAPTLHRLGIQAFEPILVEGKAIKLHPLVCTAYNADFDGDQMAVHVPLSVEAQAEARFLMLSVNNILAPKDGSPITTPSQDMVLGCYYLTIEAQDGAKGTGMVFKDFNELLLAYYNKSVHLHALVKLKVTLEDGRSSLVESTVGRFIFNENIPQDLGFVDRKENPFALEVDFLADKKSLGKIIDKCFRKHGNTETAELLDYIKALGFKYSTLGGITVAVDDMSVPEEKKVFIAEAEAKVDKYEKAYRRGLISDEERYEKVIETWTETTDKVTDALMGGLDRLNNIYIMAHSGARGSKNQIRQLAGMRGLMANASGKTVEIPVKSNFREGLSVLEYFTSSHGARKGLADTAIRTAESGYLTRRLVDVSQDVIVREIDCGTEDTTEIYAIKEGNEVIEEIYDRIVGRYTIDPILNPETGEVIVEADSMIQEDEAETIVALGIEKIRIRTVLNCKTNHGVCSKCYGRNLATGKEVNIGEAVGIIAAQSIGEPGTQLTMRTFHTGGVAGADITQGLPRVEELFEARKPKGLAVITEVSGRVEIDETGKRKEVNVIPEEGETQTYVIPYGSRLKVKQGQMLEAGDPLTQGFINPHDIVRVNGVKGVQEYIVKEVQRVYRLQGVDVNDKHIEVIVRQMLSKVKVEDPGDTDLLPGGYEDVLTFNECNKDAIDKGLRPAVAKRVLLGITKASLATDSFLSAASFQETTRVLTEAAIKGKEDHLIGLKENVILGKLIPAGTGMKKYRNIAVEKIED.

Zn(2+) is bound by residues Cys60, Cys62, Cys75, and Cys78. Residues Asp449, Asp451, and Asp453 each contribute to the Mg(2+) site. 4 residues coordinate Zn(2+): Cys790, Cys864, Cys871, and Cys874.

This sequence belongs to the RNA polymerase beta' chain family. As to quaternary structure, the RNAP catalytic core consists of 2 alpha, 1 beta, 1 beta' and 1 omega subunit. When a sigma factor is associated with the core the holoenzyme is formed, which can initiate transcription. Mg(2+) serves as cofactor. It depends on Zn(2+) as a cofactor.

It carries out the reaction RNA(n) + a ribonucleoside 5'-triphosphate = RNA(n+1) + diphosphate. Functionally, DNA-dependent RNA polymerase catalyzes the transcription of DNA into RNA using the four ribonucleoside triphosphates as substrates. This chain is DNA-directed RNA polymerase subunit beta', found in Clostridioides difficile (strain 630) (Peptoclostridium difficile).